The chain runs to 306 residues: Homeobox protein Hox-C13a (306 aa).

The segment at 68–90 (SVYSDISSPDTGRQCPAPQTSSS) is disordered. The homeobox DNA-binding region spans 236–295 (GRKKRVPYTKLQLKELEKEYAASKFITKDKRRRISAATNLSERQVTIWFQNRRVKEKKFI).

This sequence belongs to the Abd-B homeobox family.

It localises to the nucleus. Its function is as follows. Sequence-specific transcription factor which is part of a developmental regulatory system that provides cells with specific positional identities on the anterior-posterior axis. In Takifugu rubripes (Japanese pufferfish), this protein is Homeobox protein Hox-C13a (hoxc13a).